The following is a 551-amino-acid chain: Scaffold protein OPG125 (551 aa).

This sequence belongs to the orthopoxvirus protein OPG125 family. Homotrimer. Self-assembles to form a layer. Interacts with OPG158 (via N-terminus); this interaction is necessary for OPG125 association with membranes.

It localises to the membrane. In terms of biological role, scaffold protein which forms a transitory spherical honeycomb lattice providing curvature and rigidity to the convex membrane of crescent and immature virions (IV). This association occurs concomitantly with viral membrane formation. Targeted by the drug rifampicin, which prevents the formation of this lattice, and hence virus morphogenesis. In the presence of rifampicin, irregularly shaped membranes that lack the honeycomb layer accumulate around areas of electron-dense viroplasm. This layer is lost from virions during maturation from IV to mature virion (MV), through the proteolysis of OPG158 N-terminus. This chain is Scaffold protein OPG125 (OPG125), found in Homo sapiens (Human).